A 383-amino-acid polypeptide reads, in one-letter code: MNSTSFSQLENHSVHYNLSEEKPSFFAFENDDCHLPLAVIFTLALAYGAVIILGVSGNLALILIILKQKEMRNVTNILIVNLSFSDLLVAIMCLPFTFVYTLMDHWIFGEIMCKLNPFVQCVSITVSIFSLVLIAVERHQLIINPRGWRPNNRHAYIGIAVIWVLAVASSLPFMIYQVLTDEPFQNVTLDAFKDKLVCFDQFPSDSHRLSYTTLLLVLQYFGPLCFIFICYFKIYIRLKRRNNMMDKMRDSKYRSSESKRINIMLLSIVVAFAVCWLPLTIFNTVFDWNHQIIATCNHNLLFLLCHLTAMISTCVNPIFYGFLNKNFQRDLQFFFNFCDFRSRDDDYETIAMSTMHTDVSKTSLKQASPLAFKKISCVENEKI.

The Extracellular portion of the chain corresponds to 1-34; it reads MNSTSFSQLENHSVHYNLSEEKPSFFAFENDDCH. 3 N-linked (GlcNAc...) asparagine glycosylation sites follow: Asn2, Asn11, and Asn17. Residues 35 to 55 form a helical membrane-spanning segment; sequence LPLAVIFTLALAYGAVIILGV. Residues 56–87 lie on the Cytoplasmic side of the membrane; it reads SGNLALILIILKQKEMRNVTNILIVNLSFSDL. Residues 88-108 traverse the membrane as a helical segment; the sequence is LVAIMCLPFTFVYTLMDHWIF. Over 109–116 the chain is Extracellular; that stretch reads GEIMCKLN. A disulfide bridge connects residues Cys113 and Cys198. A helical transmembrane segment spans residues 117–137; it reads PFVQCVSITVSIFSLVLIAVE. At 138–154 the chain is on the cytoplasmic side; it reads RHQLIINPRGWRPNNRH. The chain crosses the membrane as a helical span at residues 155 to 175; that stretch reads AYIGIAVIWVLAVASSLPFMI. The Extracellular segment spans residues 176–211; sequence YQVLTDEPFQNVTLDAFKDKLVCFDQFPSDSHRLSY. The helical transmembrane segment at 212 to 232 threads the bilayer; that stretch reads TTLLLVLQYFGPLCFIFICYF. Residues 233–260 lie on the Cytoplasmic side of the membrane; the sequence is KIYIRLKRRNNMMDKMRDSKYRSSESKR. The helical transmembrane segment at 261–281 threads the bilayer; sequence INIMLLSIVVAFAVCWLPLTI. Residues 282-299 lie on the Extracellular side of the membrane; the sequence is FNTVFDWNHQIIATCNHN. The chain crosses the membrane as a helical span at residues 300 to 320; that stretch reads LLFLLCHLTAMISTCVNPIFY. The Cytoplasmic portion of the chain corresponds to 321–383; the sequence is GFLNKNFQRD…KISCVENEKI (63 aa). Cys338 carries the S-palmitoyl cysteine lipid modification. Phosphoserine is present on residues Ser368 and Ser376.

The protein belongs to the G-protein coupled receptor 1 family.

It localises to the cell membrane. Functionally, receptor for neuropeptide Y and peptide YY. This chain is Neuropeptide Y receptor type 1 (NPY1R), found in Cavia porcellus (Guinea pig).